The chain runs to 161 residues: Regulator of ribonuclease activity A (161 aa).

Belongs to the RraA family. As to quaternary structure, homotrimer. Binds to both RNA-binding sites in the C-terminal region of Rne and to RhlB.

It localises to the cytoplasm. Its function is as follows. Globally modulates RNA abundance by binding to RNase E (Rne) and regulating its endonucleolytic activity. Can modulate Rne action in a substrate-dependent manner by altering the composition of the degradosome. Modulates RNA-binding and helicase activities of the degradosome. In Shigella flexneri serotype 5b (strain 8401), this protein is Regulator of ribonuclease activity A.